Reading from the N-terminus, the 263-residue chain is Methylesterase 4 (263 aa).

Residue serine 84 is the Acyl-ester intermediate of the active site. Catalysis depends on charge relay system residues aspartate 213 and histidine 241.

Belongs to the AB hydrolase superfamily. Methylesterase family.

The catalysed reaction is methyl salicylate + H2O = salicylate + methanol + H(+). It functions in the pathway plant hormone biosynthesis. Esterase activity is down-regulated by salicylic acid (SA). In terms of biological role, methylesterase shown to have carboxylesterase activity and methyl salicylate (MeSA) esterase activity in vitro. This Arabidopsis thaliana (Mouse-ear cress) protein is Methylesterase 4.